The sequence spans 312 residues: DNA primase small subunit PriS (312 aa).

Active-site residues include Asp88, Asp90, and Asp215.

The protein belongs to the eukaryotic-type primase small subunit family. In terms of assembly, heterodimer of a small subunit (PriS) and a large subunit (PriL). It depends on Mg(2+) as a cofactor. The cofactor is Mn(2+).

Its function is as follows. Catalytic subunit of DNA primase, an RNA polymerase that catalyzes the synthesis of short RNA molecules used as primers for DNA polymerase during DNA replication. The small subunit contains the primase catalytic core and has DNA synthesis activity on its own. Binding to the large subunit stabilizes and modulates the activity, increasing the rate of DNA synthesis while decreasing the length of the DNA fragments, and conferring RNA synthesis capability. The DNA polymerase activity may enable DNA primase to also catalyze primer extension after primer synthesis. May also play a role in DNA repair. The chain is DNA primase small subunit PriS from Pyrobaculum arsenaticum (strain DSM 13514 / JCM 11321 / PZ6).